The chain runs to 86 residues: Centromere protein W (86 aa).

This sequence belongs to the CENP-W/WIP1 family. As to quaternary structure, heterodimer with CENPT; this dimer coassembles with CENPS-CENPX heterodimers at centromeres to form the tetrameric CENP-T-W-S-X complex, which is a subcomplex of the large constitutive centromere-associated network (CCAN, also known as the interphase centromere complex or ICEN). Interacts with NPM1.

It is found in the nucleus. The protein localises to the chromosome. It localises to the centromere. Its subcellular location is the kinetochore. The protein resides in the nucleus matrix. It is found in the nucleolus. Its function is as follows. Component of the CENPA-NAC (nucleosome-associated) complex, a complex that plays a central role in assembly of kinetochore proteins, mitotic progression and chromosome segregation. The CENPA-NAC complex recruits the CENPA-CAD (nucleosome distal) complex and may be involved in incorporation of newly synthesized CENPA into centromeres. Part of a nucleosome-associated complex that binds specifically to histone H3-containing nucleosomes at the centromere, as opposed to nucleosomes containing CENPA. Component of the heterotetrameric CENP-T-W-S-X complex that binds and supercoils DNA, and plays an important role in kinetochore assembly. CENPW has a fundamental role in kinetochore assembly and function. It is one of the inner kinetochore proteins, with most further proteins binding downstream. Required for normal chromosome organization and normal progress through mitosis. The chain is Centromere protein W (Cenpw) from Mus musculus (Mouse).